The primary structure comprises 706 residues: DNA ligase (706 aa).

Residues 47 to 51 (DSEYD), 96 to 97 (SI), and glutamate 133 contribute to the NAD(+) site. Lysine 135 (N6-AMP-lysine intermediate) is an active-site residue. 4 residues coordinate NAD(+): arginine 156, glutamate 192, lysine 323, and lysine 347. 4 residues coordinate Zn(2+): cysteine 441, cysteine 444, cysteine 459, and cysteine 465. Residues 624–706 (VAPKPLSGKT…MRLLASAEAE (83 aa)) enclose the BRCT domain.

It belongs to the NAD-dependent DNA ligase family. LigA subfamily. Requires Mg(2+) as cofactor. Mn(2+) serves as cofactor.

It catalyses the reaction NAD(+) + (deoxyribonucleotide)n-3'-hydroxyl + 5'-phospho-(deoxyribonucleotide)m = (deoxyribonucleotide)n+m + AMP + beta-nicotinamide D-nucleotide.. Functionally, DNA ligase that catalyzes the formation of phosphodiester linkages between 5'-phosphoryl and 3'-hydroxyl groups in double-stranded DNA using NAD as a coenzyme and as the energy source for the reaction. It is essential for DNA replication and repair of damaged DNA. The chain is DNA ligase from Polaromonas sp. (strain JS666 / ATCC BAA-500).